The sequence spans 191 residues: DNA-directed RNA polymerase subunit Rpo3 (191 aa).

It belongs to the archaeal Rpo3/eukaryotic RPB3 RNA polymerase subunit family. As to quaternary structure, part of the RNA polymerase complex. Interacts with Rpo12. Forms an Rpo3-Rpo10-Rpo11-Rpo12 complex upon coexpression.

The protein resides in the cytoplasm. The enzyme catalyses RNA(n) + a ribonucleoside 5'-triphosphate = RNA(n+1) + diphosphate. Its function is as follows. DNA-dependent RNA polymerase (RNAP) catalyzes the transcription of DNA into RNA using the four ribonucleoside triphosphates as substrates. This is DNA-directed RNA polymerase subunit Rpo3 from Methanocaldococcus jannaschii (strain ATCC 43067 / DSM 2661 / JAL-1 / JCM 10045 / NBRC 100440) (Methanococcus jannaschii).